A 401-amino-acid chain; its full sequence is MVKFDSGSESEMTNGDEVHINTKHEVKSRMANGNGVHNVPDHDQFQDRAEMEVLILPDLFSSLMSVPARENPHYASVKADADEWISSVINADAKWASRNKRVDFTYLASIWAPDCSAFALRTSADWNSWAFLFDDQFDEGHLSNDLDGAINEIARTREIMEGTAPRYTADSEHPIRYVFQTLCDRVKQSPEGFYAGKPSSDRFYRRWMWAHELYWEGLVAQVRTNVEGRSFTRGPEEYLAMRRGSLGAYPALVNNEWAYGIDLPEDVADHPLVFEIMVIMSDQILLVNDILSYEKDLRLGVDHNMVRLLKAKGLSTQQAINEVGVMINNCYRRYYRALSELPCFGEEADRALLGYLEVEKNHALGSLLWSYKTGRYFKSKEDGARVRKTRELLIPKKMAAL.

Positions 134 and 139 each coordinate Mg(2+). The short motif at 134–138 is the DDXXD motif element; it reads DDQFD. Residue Arg242 participates in substrate binding. Residues Asn288 and Ser292 each contribute to the Mg(2+) site. A substrate-binding site is contributed by Lys295. Residue Asp296 participates in Mg(2+) binding. Position 375–376 (375–376) interacts with substrate; it reads RY.

The protein belongs to the terpene synthase family. Requires Mg(2+) as cofactor.

The enzyme catalyses (2E,6E)-farnesyl diphosphate = (1R,4R,5S)-(-)-guaia-6,10(14)-diene + diphosphate. It functions in the pathway secondary metabolite biosynthesis; terpenoid biosynthesis. In terms of biological role, catalyzes the conversion of (2E,6E)-farnesyl diphosphate (FPP) to yield the bicyclic sesquiterpene guaia-6,10(14)-diene via a 1,10-cyclization, which requires the abstraction of the pyrophosphate from FPP to yield the (E,E)-germacradienyl cation. The only accepted substrate is farnesyl diphosphate (FPP). This Fusarium mangiferae (Mango malformation disease fungus) protein is (1R,4R,5S)-(-)-guaia-6,10(14)-diene synthase.